The primary structure comprises 451 residues: Serine--tRNA ligase, cytoplasmic (451 aa).

An L-serine-binding site is contributed by 236–238 (TSE). ATP is bound by residues 267–269 (RKE) and Val-283. An L-serine-binding site is contributed by Glu-290. 354 to 357 (ELVS) serves as a coordination point for ATP. Thr-392 is an L-serine binding site.

It belongs to the class-II aminoacyl-tRNA synthetase family. Type-1 seryl-tRNA synthetase subfamily. Homodimer. The tRNA molecule binds across the dimer.

It is found in the cytoplasm. The catalysed reaction is tRNA(Ser) + L-serine + ATP = L-seryl-tRNA(Ser) + AMP + diphosphate + H(+). It carries out the reaction tRNA(Sec) + L-serine + ATP = L-seryl-tRNA(Sec) + AMP + diphosphate + H(+). It participates in aminoacyl-tRNA biosynthesis; selenocysteinyl-tRNA(Sec) biosynthesis; L-seryl-tRNA(Sec) from L-serine and tRNA(Sec): step 1/1. Its function is as follows. Catalyzes the attachment of serine to tRNA(Ser). Is also able to aminoacylate tRNA(Sec) with serine, to form the misacylated tRNA L-seryl-tRNA(Sec), which will be further converted into selenocysteinyl-tRNA(Sec). The sequence is that of Serine--tRNA ligase, cytoplasmic (serS) from Dictyostelium discoideum (Social amoeba).